The sequence spans 469 residues: 3-isopropylmalate dehydratase large subunit (469 aa).

The [4Fe-4S] cluster site is built by Cys-350, Cys-410, and Cys-413.

This sequence belongs to the aconitase/IPM isomerase family. LeuC type 1 subfamily. Heterodimer of LeuC and LeuD. [4Fe-4S] cluster serves as cofactor.

The enzyme catalyses (2R,3S)-3-isopropylmalate = (2S)-2-isopropylmalate. Its pathway is amino-acid biosynthesis; L-leucine biosynthesis; L-leucine from 3-methyl-2-oxobutanoate: step 2/4. Catalyzes the isomerization between 2-isopropylmalate and 3-isopropylmalate, via the formation of 2-isopropylmaleate. This Rhodopseudomonas palustris (strain TIE-1) protein is 3-isopropylmalate dehydratase large subunit.